The sequence spans 331 residues: Centriolar satellite-associated tubulin polyglutamylase complex regulator 1 (331 aa).

A required for interaction with PCM1 region spans residues 1-111; it reads MLSPERLALP…HCLLQLLCPD (111 aa). The required for interaction with TPGS1, LRRC49, and TTLL1 stretch occupies residues 1–225; it reads MLSPERLALP…SCPPPALVKE (225 aa). Positions 112–331 are required for interaction with TPGS2; the sequence is FPLELTQKAA…STEETDESET (220 aa). Residues 292-331 form a disordered region; the sequence is SCLPSRTPPRVGSPWKPLHRSRKLDAESDGSTEETDESET. Acidic residues predominate over residues 318–331; that stretch reads ESDGSTEETDESET. Ser-319 carries the phosphoserine modification.

The protein belongs to the CSTPP1 family. In terms of assembly, interacts with PCM1. Interacts with TTLL1, TPGS1, TPGS2 and LRRC49; the interactions link CSTPP1 to the complex TPGC. Binds to alpha-tubulin.

The protein localises to the cytoplasm. The protein resides in the cytoskeleton. It localises to the microtubule organizing center. Its subcellular location is the centrosome. It is found in the centriolar satellite. Regulator of the tubulin polyglutamylase complex (TPGC) that controls cytoskeletal organization, nuclear shape, and cilium disassembly by balancing microtubule and actin assembly. Regulates the assembly and stability of the TPGC and thereby modulates polyglutamylation of the microtubule, which antagonizes MAP4 binding. This is Centriolar satellite-associated tubulin polyglutamylase complex regulator 1 (Cstpp1) from Rattus norvegicus (Rat).